The sequence spans 270 residues: Putative tRNA (cytidine(32)/guanosine(34)-2'-O)-methyltransferase (270 aa).

Residues G53, W55, D78, D94, and D119 each coordinate S-adenosyl-L-methionine. The active-site Proton acceptor is the K159.

It belongs to the class I-like SAM-binding methyltransferase superfamily. RNA methyltransferase RlmE family. TRM7 subfamily.

It localises to the cytoplasm. The enzyme catalyses cytidine(32)/guanosine(34) in tRNA + 2 S-adenosyl-L-methionine = 2'-O-methylcytidine(32)/2'-O-methylguanosine(34) in tRNA + 2 S-adenosyl-L-homocysteine + 2 H(+). Methylates the 2'-O-ribose of nucleotides at positions 32 and 34 of the tRNA anticodon loop of substrate tRNAs. In Dictyostelium discoideum (Social amoeba), this protein is Putative tRNA (cytidine(32)/guanosine(34)-2'-O)-methyltransferase (fsjA).